We begin with the raw amino-acid sequence, 313 residues long: GTPase Era (313 aa).

The Era-type G domain maps to 20-187 (RSGFVALIGA…MDYLAETLPE (168 aa)). The segment at 28–35 (GATNAGKS) is G1. Residue 28–35 (GATNAGKS) coordinates GTP. Positions 54–58 (QTTRA) are G2. Positions 75–78 (DTPG) are G3. GTP-binding positions include 75 to 79 (DTPGI) and 137 to 140 (NKVD). A G4 region spans residues 137–140 (NKVD). Residues 166 to 168 (ISA) are G5. The KH type-2 domain occupies 218–295 (LHQELPYASH…HLFLFVKVRE (78 aa)).

This sequence belongs to the TRAFAC class TrmE-Era-EngA-EngB-Septin-like GTPase superfamily. Era GTPase family. In terms of assembly, monomer.

It is found in the cytoplasm. It localises to the cell inner membrane. An essential GTPase that binds both GDP and GTP, with rapid nucleotide exchange. Plays a role in 16S rRNA processing and 30S ribosomal subunit biogenesis and possibly also in cell cycle regulation and energy metabolism. The chain is GTPase Era from Rhizobium meliloti (strain 1021) (Ensifer meliloti).